The primary structure comprises 213 residues: FMN-dependent NADH:quinone oxidoreductase 3 (213 aa).

Residues Ser10, 16-18, and 96-99 contribute to the FMN site; these read SVS and MYNF.

This sequence belongs to the azoreductase type 1 family. Homodimer. FMN is required as a cofactor.

The catalysed reaction is 2 a quinone + NADH + H(+) = 2 a 1,4-benzosemiquinone + NAD(+). The enzyme catalyses N,N-dimethyl-1,4-phenylenediamine + anthranilate + 2 NAD(+) = 2-(4-dimethylaminophenyl)diazenylbenzoate + 2 NADH + 2 H(+). Functionally, quinone reductase that provides resistance to thiol-specific stress caused by electrophilic quinones. Shows a preference for naphthoquinones such as plumbagin. Also exhibits azoreductase activity. Catalyzes the reductive cleavage of the azo bond in aromatic azo compounds to the corresponding amines. Preferred substrates are methyl red, amaranth and p-aminoazobenzene sulfonamide (PAABSA). This is FMN-dependent NADH:quinone oxidoreductase 3 from Pseudomonas aeruginosa (strain ATCC 15692 / DSM 22644 / CIP 104116 / JCM 14847 / LMG 12228 / 1C / PRS 101 / PAO1).